A 389-amino-acid chain; its full sequence is Protein WALLS ARE THIN 1 (389 aa).

Helical transmembrane passes span 18–38, 49–69, 76–96, 111–131, 143–163, 198–218, 230–250, 266–286, 294–314, and 319–339; these read LQLHIAMLTLQFGYAGFHVVS, LVFPVYRNIIALLLLLPFAYF, PAITLNFLIQFFFLALIGITA, TFASSMQNSVPAITFLMAALL, GISKILGTALCVAGASVITLY, WTLGCIYLIGHCLSWSGWLVF, LSVTSYTCFFGIIQFLIIAAF, LFTILYAGIVASGIAFAVQIW, VFVAVYQPVQTLVVAIMASIA, and FYLGGIIGAVLIIAGLYFVLY. EamA domains follow at residues 32–161 and 210–339; these read AGFH…SVIT and LSWS…FVLY. Serine 372 carries the post-translational modification Phosphoserine.

It belongs to the drug/metabolite transporter (DMT) superfamily. Plant drug/metabolite exporter (P-DME) (TC 2.A.7.4) family. In terms of tissue distribution, mostly expressed in stems and hypocotyls, also present in seedlings, root, leaves, flowers and siliques. Ubiquitous, mostly expressed in vascular tissues and secondary wall-forming cells, including developing xylem vessels and fibers.

The protein resides in the vacuole membrane. Its function is as follows. Required for secondary wall formation in fibers, especially in short days conditions. Promotes indole metabolism and transport (e.g. tryptophan, neoglucobrassicin and auxin (indole-3-acetic acid)). May prevent salicylic-acid (SA) accumulation. This Arabidopsis thaliana (Mouse-ear cress) protein is Protein WALLS ARE THIN 1 (WAT1).